The following is a 151-amino-acid chain: NADH dehydrogenase [ubiquinone] 1 beta subcomplex subunit 11, mitochondrial (151 aa).

Residues 1 to 29 constitute a mitochondrion transit peptide; that stretch reads MAARLLSLYGRCLSAAGAMRGLPAARVRW. The disordered stretch occupies residues 40 to 62; sequence GVEKKRQREPTMQWQEDPEPEDE. The chain crosses the membrane as a helical span at residues 87–107; it reads AVFFFGFSIVLVFGTTFVAYV.

Belongs to the complex I NDUFB11 subunit family. In terms of assembly, complex I is composed of 45 different subunits. Interacts with BCAP31.

Its subcellular location is the mitochondrion inner membrane. Its function is as follows. Accessory subunit of the mitochondrial membrane respiratory chain NADH dehydrogenase (Complex I), that is believed not to be involved in catalysis. Complex I functions in the transfer of electrons from NADH to the respiratory chain. The immediate electron acceptor for the enzyme is believed to be ubiquinone. The chain is NADH dehydrogenase [ubiquinone] 1 beta subcomplex subunit 11, mitochondrial (Ndufb11) from Mus musculus (Mouse).